The chain runs to 157 residues: SsrA-binding protein (157 aa).

Belongs to the SmpB family.

The protein resides in the cytoplasm. Its function is as follows. Required for rescue of stalled ribosomes mediated by trans-translation. Binds to transfer-messenger RNA (tmRNA), required for stable association of tmRNA with ribosomes. tmRNA and SmpB together mimic tRNA shape, replacing the anticodon stem-loop with SmpB. tmRNA is encoded by the ssrA gene; the 2 termini fold to resemble tRNA(Ala) and it encodes a 'tag peptide', a short internal open reading frame. During trans-translation Ala-aminoacylated tmRNA acts like a tRNA, entering the A-site of stalled ribosomes, displacing the stalled mRNA. The ribosome then switches to translate the ORF on the tmRNA; the nascent peptide is terminated with the 'tag peptide' encoded by the tmRNA and targeted for degradation. The ribosome is freed to recommence translation, which seems to be the essential function of trans-translation. The protein is SsrA-binding protein of Clostridium novyi (strain NT).